The chain runs to 103 residues: Co-chaperonin GroES (103 aa).

Belongs to the GroES chaperonin family. As to quaternary structure, heptamer of 7 subunits arranged in a ring. Interacts with the chaperonin GroEL.

The protein resides in the cytoplasm. In terms of biological role, together with the chaperonin GroEL, plays an essential role in assisting protein folding. The GroEL-GroES system forms a nano-cage that allows encapsulation of the non-native substrate proteins and provides a physical environment optimized to promote and accelerate protein folding. GroES binds to the apical surface of the GroEL ring, thereby capping the opening of the GroEL channel. The polypeptide is Co-chaperonin GroES (Crocosphaera subtropica (strain ATCC 51142 / BH68) (Cyanothece sp. (strain ATCC 51142))).